We begin with the raw amino-acid sequence, 256 residues long: Enkurin (256 aa).

The tract at residues 48 to 92 (TMGPAKLEVPSPKDFLKKHSKEKTLPPKKKFDRHEPKKPPVPLRT) is disordered. Basic and acidic residues predominate over residues 61-72 (DFLKKHSKEKTL). Residues 83–89 (PKKPPVP) carry the SH3-binding motif. In terms of domain architecture, Enkurin spans 160–252 (KRNEEVKKAQ…VLEKHKIIYI (93 aa)). Residues 176–187 (IQENLRKAAMKR) enclose the IQ domain.

As to quaternary structure, microtubule inner protein component of sperm flagellar doublet microtubules. Binds calmodulin via its IQ domain. Interacts with TRPC1, TRPC2, TRPC5, but not TRPC3. Interacts with CFAP45.

It localises to the cytoplasm. Its subcellular location is the cytoskeleton. It is found in the cilium axoneme. The protein localises to the flagellum axoneme. In terms of biological role, adapter that functions to localize a calcium-sensitive signal transduction machinery in sperm to a calcium-permeable ion channel. Microtubule inner protein (MIP) part of the dynein-decorated doublet microtubules (DMTs) in cilia axoneme, which is required for motile cilia beating. This chain is Enkurin (ENKUR), found in Sus scrofa (Pig).